Here is a 259-residue protein sequence, read N- to C-terminus: Dihydroorotate dehydrogenase B (NAD(+)), electron transfer subunit (259 aa).

Positions 2-102 (MQKQNMIVVN…LGPLGHGFPV (101 aa)) constitute an FAD-binding FR-type domain. Residues 53–56 (RPIS), 70–72 (LYR), and 77–78 (GT) contribute to the FAD site. Positions 221, 226, 229, and 246 each coordinate [2Fe-2S] cluster.

The protein belongs to the PyrK family. As to quaternary structure, heterotetramer of 2 PyrK and 2 PyrD type B subunits. The cofactor is [2Fe-2S] cluster. FAD serves as cofactor.

It functions in the pathway pyrimidine metabolism; UMP biosynthesis via de novo pathway; orotate from (S)-dihydroorotate (NAD(+) route): step 1/1. In terms of biological role, responsible for channeling the electrons from the oxidation of dihydroorotate from the FMN redox center in the PyrD type B subunit to the ultimate electron acceptor NAD(+). The protein is Dihydroorotate dehydrogenase B (NAD(+)), electron transfer subunit of Bacillus cereus (strain ATCC 14579 / DSM 31 / CCUG 7414 / JCM 2152 / NBRC 15305 / NCIMB 9373 / NCTC 2599 / NRRL B-3711).